The sequence spans 326 residues: Vitamin B12 import system permease protein BtuC (326 aa).

Over 1–10 the chain is Cytoplasmic; the sequence is MLTLARQQQR. Residues 11–35 form a helical membrane-spanning segment; the sequence is QNIRWLLCLSVLMLLALLLSLCAGE. Topologically, residues 36–56 are periplasmic; sequence QWISPGDWFSPRGELFVWQIR. Residues 57-81 form a helical membrane-spanning segment; the sequence is LPRTLAVLLVGAALAISGAVMQALF. Residues 82-92 lie on the Cytoplasmic side of the membrane; it reads ENPLAEPGLLG. A helical membrane pass occupies residues 93-107; that stretch reads VSNGAGVGLIAAVLL. Topologically, residues 108–113 are periplasmic; the sequence is GQGQLP. A helical membrane pass occupies residues 114–138; that stretch reads NWALGLCAIAGALIITLILLRFARR. Residues 139-141 lie on the Cytoplasmic side of the membrane; it reads HLS. The helical transmembrane segment at 142–166 threads the bilayer; that stretch reads TSRLLLAGVALGIICSALMTWAIYF. Topologically, residues 167–190 are periplasmic; it reads STSVDLRQLMYWMMGGFGGVDWRQ. The chain crosses the membrane as a helical span at residues 191 to 206; sequence SWLMLALIPMLLWICC. The Cytoplasmic portion of the chain corresponds to 207–228; the sequence is QSRPMNMLALGEISARQLGLPL. The helical transmembrane segment at 229 to 249 threads the bilayer; that stretch reads WFWRNVLVAATGWMVGVSVAL. Residues 250 to 257 are Periplasmic-facing; that stretch reads AGAIGFIG. A helical transmembrane segment spans residues 258–267; that stretch reads LVIPHILRLC. The Cytoplasmic portion of the chain corresponds to 268-274; the sequence is GLTDHRA. Residues 275-296 form a helical membrane-spanning segment; the sequence is LLPGCALAGASALLLADIVARL. Topologically, residues 297–304 are periplasmic; sequence ALAAAELP. Residues 305-324 form a helical membrane-spanning segment; sequence IGVVTATLGAPVFIWLLLKA. Topologically, residues 325-326 are cytoplasmic; the sequence is GR.

This sequence belongs to the binding-protein-dependent transport system permease family. FecCD subfamily. As to quaternary structure, the complex is composed of two ATP-binding proteins (BtuD), two transmembrane proteins (BtuC) and a solute-binding protein (BtuF).

It is found in the cell inner membrane. Part of the ABC transporter complex BtuCDF involved in vitamin B12 import. Involved in the translocation of the substrate across the membrane. In Escherichia coli O157:H7, this protein is Vitamin B12 import system permease protein BtuC (btuC).